Here is a 1174-residue protein sequence, read N- to C-terminus: Tyrosine-protein phosphatase non-receptor type 21 (1174 aa).

The 286-residue stretch at 23-308 (LVARIQLLNN…ARHKFYRLNQ (286 aa)) folds into the FERM domain. Residues 396–423 (SAHSTNSLNNPQPYLQPSPMSSNPSITG) show a composition bias toward polar residues. Residues 396–445 (SAHSTNSLNNPQPYLQPSPMSSNPSITGSDVMRPDYLPSHRHSAVIPPSY) are disordered. 5 positions are modified to phosphoserine: serine 577, serine 589, serine 590, serine 637, and serine 673. The interval 673-692 (SQPSVFTERTQREGPEEAEG) is disordered. Residues 681-692 (RTQREGPEEAEG) show a composition bias toward basic and acidic residues. Phosphoserine is present on residues serine 710 and serine 711. Disordered stretches follow at residues 711-745 (SEEE…DPPG) and 769-806 (KRMM…TSGR). Over residues 712–722 (EEEEDEDFEEE) the composition is skewed to acidic residues. Positions 796–805 (MSESDLTTSG) are enriched in polar residues. Phosphoserine is present on residues serine 797, serine 799, and serine 804. Positions 896–1167 (VFTEYERILK…TFVYRVLIQF (272 aa)) constitute a Tyrosine-protein phosphatase domain. Substrate contacts are provided by residues glutamate 1067, 1108–1114 (CSAGVGR), and glutamine 1152. The active-site Phosphocysteine intermediate is cysteine 1108.

This sequence belongs to the protein-tyrosine phosphatase family. Non-receptor class subfamily.

Its subcellular location is the cytoplasm. The protein resides in the cytoskeleton. It catalyses the reaction O-phospho-L-tyrosyl-[protein] + H2O = L-tyrosyl-[protein] + phosphate. The protein is Tyrosine-protein phosphatase non-receptor type 21 (PTPN21) of Homo sapiens (Human).